The primary structure comprises 443 residues: Phosphoglucosamine mutase (443 aa).

The active-site Phosphoserine intermediate is the Ser-101. The Mg(2+) site is built by Ser-101, Asp-239, Asp-241, and Asp-243. Residue Ser-101 is modified to Phosphoserine.

The protein belongs to the phosphohexose mutase family. It depends on Mg(2+) as a cofactor. Post-translationally, activated by phosphorylation.

It catalyses the reaction alpha-D-glucosamine 1-phosphate = D-glucosamine 6-phosphate. Functionally, catalyzes the conversion of glucosamine-6-phosphate to glucosamine-1-phosphate. This chain is Phosphoglucosamine mutase, found in Francisella tularensis subsp. novicida (strain U112).